Consider the following 153-residue polypeptide: MNDQIILALDVGERRIGVAISDADARIAAPLTTINAHPPERAIAQIVRLVQERGVSRVVVGLPLTMRGERGPQAEVVQRFADTLSSALSCPVEMFDERLTSVAAEQMLRNLGLKPAKIKAQIDQVAASIILQDYLDARRSNPNRSHELPHSSD.

It belongs to the YqgF nuclease family.

It localises to the cytoplasm. Functionally, could be a nuclease involved in processing of the 5'-end of pre-16S rRNA. This Chloroflexus aurantiacus (strain ATCC 29366 / DSM 635 / J-10-fl) protein is Putative pre-16S rRNA nuclease.